We begin with the raw amino-acid sequence, 144 residues long: 3-dehydroquinate dehydratase (144 aa).

The active-site Proton acceptor is tyrosine 24. Positions 73, 79, and 86 each coordinate substrate. The Proton donor role is filled by histidine 99. Residues leucine 100–serine 101 and arginine 110 contribute to the substrate site.

Belongs to the type-II 3-dehydroquinase family. In terms of assembly, homododecamer.

It carries out the reaction 3-dehydroquinate = 3-dehydroshikimate + H2O. The protein operates within metabolic intermediate biosynthesis; chorismate biosynthesis; chorismate from D-erythrose 4-phosphate and phosphoenolpyruvate: step 3/7. Catalyzes a trans-dehydration via an enolate intermediate. The protein is 3-dehydroquinate dehydratase of Shewanella putrefaciens (strain CN-32 / ATCC BAA-453).